The following is a 1048-amino-acid chain: MPPPPFRDAPSSAKSSQRYTPLHESIPEELNDKQYSSDADSLPLSDPSDGEDDSEIRLRRVDRNGTRSNQATAYVPVVRKSGDVEAYFDSIAEAELELLSASRQYDGVDDDDDDSDGYGVGVKRGQRQGLLKRTHDGRTGWRTVYYSKYWWRALIGVVVVLVLLVLVFLGLARSKQVGDELDYSMIPAESWFPSPRGGALKEWAADYQKAALLVGNMTLIEKVNITTGTGWQMGLCVGNTGPAESVHFPSLCLQDGPMGIRYADHISAFPPGLTTGATWNRDLIRERGIAMGLEARLKGVNVLLGPSMGPLGMMPAGGRNWEAFGSDPVLQGVAAAETIKGIQSNGVMATAKHFVMNEQEHFRQPFEWGIPTALSSNVGDRALHEVFAWPFAESIRADVASVMCAYQMVNNSHACENSKLLNGILKDELGFQGFVQSDWLAQRSGINSALGGLDMSMPGDGLHWADGKSLWGSELTRAVLNTSIPMERLNDMVTRIVAAWYHLGQDQWERPPPDGEGGPNFSSWTDDQTGWWQQASVEAGDQDGGWGIVNKYVDAGAGHGDIARKVAAEGIVLVKNNNNTLPLSRSPPSPYRIGIYGDDAGPALGPNACPDRGCSQGTLASGWGSGTVEFPFLVSPLEALQGAWETEVEITPYLQNMVMPVSVQDKDLCLVFANANSGEGYIHAGGIHGDRNDLFLQKGGDTLIQAVANNCAGPTVVVVHAVGPVVVESWIDLPGVDAVLFAHLPGQESGNALVDVLFGDVDASGRLPYTVGKSLEDYGPGAQVLYENNAPVPQVDFLDALYIDYRYFDKFNITPRYEFGFGLSYTSFELSKLYIKSMQWKSRLPKSRPQDQVSPPEYDTRPPVNENVLFPEGFHALSKYVYSYLPSLDGTAAANYTEYPDGYDLPRQPSEAGGDLGGNPSLYEEMAKVQVQVANTGARAGQTVVQAYVSFPSDVVEEGDLVEVPVDEKGETVTFVPSKEQVEFPDRVLRNFTKIALEPGEKKTVEMTLSRKDLSYWSARQQNWVMPDGDFQIWVGQSSRDLPLHGKY.

A disordered region spans residues 1 to 54 (MPPPPFRDAPSSAKSSQRYTPLHESIPEELNDKQYSSDADSLPLSDPSDGEDDS). Over 1-150 (MPPPPFRDAP…WRTVYYSKYW (150 aa)) the chain is Cytoplasmic. Low complexity predominate over residues 36–47 (SSDADSLPLSDP). A helical; Signal-anchor for type II membrane protein membrane pass occupies residues 151–171 (WRALIGVVVVLVLLVLVFLGL). Over 172 to 1048 (ARSKQVGDEL…SRDLPLHGKY (877 aa)) the chain is Extracellular. Asparagine 216, asparagine 224, and asparagine 410 each carry an N-linked (GlcNAc...) asparagine glycan. The active site involves aspartate 438. 5 N-linked (GlcNAc...) asparagine glycosylation sites follow: asparagine 481, asparagine 520, asparagine 578, asparagine 895, and asparagine 991. Residues 508–527 (WERPPPDGEGGPNFSSWTDD) form a disordered region.

It belongs to the glycosyl hydrolase 3 family.

The protein localises to the cell membrane. The catalysed reaction is Hydrolysis of terminal, non-reducing beta-D-glucosyl residues with release of beta-D-glucose.. It functions in the pathway glycan metabolism; cellulose degradation. Its function is as follows. Beta-glucosidases are one of a number of cellulolytic enzymes involved in the degradation of cellulosic biomass. Catalyzes the last step releasing glucose from the inhibitory cellobiose. The sequence is that of Probable beta-glucosidase E (bglE) from Aspergillus oryzae (strain ATCC 42149 / RIB 40) (Yellow koji mold).